A 126-amino-acid chain; its full sequence is Large ribosomal subunit protein eL32 (126 aa).

It belongs to the eukaryotic ribosomal protein eL32 family.

In Thermococcus onnurineus (strain NA1), this protein is Large ribosomal subunit protein eL32.